Consider the following 143-residue polypeptide: UPF0225 protein Reut_A0143 (143 aa).

It belongs to the UPF0225 family.

The chain is UPF0225 protein Reut_A0143 from Cupriavidus pinatubonensis (strain JMP 134 / LMG 1197) (Cupriavidus necator (strain JMP 134)).